Here is a 145-residue protein sequence, read N- to C-terminus: uncharacterized protein (145 aa).

A signal peptide spans 1-20; it reads MPSKVCTLILLFSVINQMKC.

This is an uncharacterized protein from Caenorhabditis elegans.